We begin with the raw amino-acid sequence, 80 residues long: Putative UPF0377 protein YMR324C (80 aa).

A helical membrane pass occupies residues Ala-13 to Val-33.

This sequence belongs to the UPF0377 family.

It localises to the membrane. The protein is Putative UPF0377 protein YMR324C of Saccharomyces cerevisiae (strain ATCC 204508 / S288c) (Baker's yeast).